The primary structure comprises 345 residues: Platelet-derived growth factor C (345 aa).

Positions 1–22 (MSLFGLLLLTSALAGQRQGTQA) are cleaved as a signal peptide. Asn25 and Asn55 each carry an N-linked (GlcNAc...) asparagine glycan. The 118-residue stretch at 46–163 (HERIITVSTN…PGFCIHYNIV (118 aa)) folds into the CUB domain. 4 disulfides stabilise this stretch: Cys104/Cys124, Cys250/Cys294, Cys280/Cys335, and Cys287/Cys337.

The protein belongs to the PDGF/VEGF growth factor family. In terms of assembly, homodimer; disulfide-linked. Interacts with PDGFRA homodimers, and with heterodimers formed by PDGFRA and PDGFRB. Interacts (via CUB domain) with PLAT (via kringle domain). Proteolytic removal of the N-terminal CUB domain releasing the core domain is necessary for unmasking the receptor-binding epitopes of the core domain. Cleavage after basic residues in the hinge region (region connecting the CUB and growth factor domains) gives rise to the receptor-binding form. Cleaved by PLAT and PLG. Post-translationally, sumoylated with SUMO1. In terms of processing, N-glycosylated. As to expression, expressed in the fallopian tube, vascular smooth muscle cells in kidney, breast and colon and in visceral smooth muscle of the gastrointestinal tract. Highly expressed in retinal pigment epithelia. Expressed in medulloblastoma. In the kidney, constitutively expressed in parietal epithelial cells of Bowman's capsule, tubular epithelial cells and in arterial endothelial cells (at protein level). Highly expressed in the platelets, prostate, testis and uterus. Higher expression is observed in uterine leiomyomata. Weaker expression in the spleen, thymus, heart, pancreas, liver, ovary cells and small intestine, and negligible expression in the colon and peripheral blood leukocytes.

The protein resides in the cytoplasm. The protein localises to the cytosol. It is found in the secreted. It localises to the nucleus. Its subcellular location is the cytoplasmic granule. The protein resides in the cell membrane. Growth factor that plays an essential role in the regulation of embryonic development, cell proliferation, cell migration, survival and chemotaxis. Potent mitogen and chemoattractant for cells of mesenchymal origin. Required for normal skeleton formation during embryonic development, especially for normal development of the craniofacial skeleton and for normal development of the palate. Required for normal skin morphogenesis during embryonic development. Plays an important role in wound healing, where it appears to be involved in three stages: inflammation, proliferation and remodeling. Plays an important role in angiogenesis and blood vessel development. Involved in fibrotic processes, in which transformation of interstitial fibroblasts into myofibroblasts plus collagen deposition occurs. The CUB domain has mitogenic activity in coronary artery smooth muscle cells, suggesting a role beyond the maintenance of the latency of the PDGF domain. In the nucleus, PDGFC seems to have additional function. This Homo sapiens (Human) protein is Platelet-derived growth factor C (PDGFC).